We begin with the raw amino-acid sequence, 84 residues long: Cell division topological specificity factor (84 aa).

The protein belongs to the MinE family.

In terms of biological role, prevents the cell division inhibition by proteins MinC and MinD at internal division sites while permitting inhibition at polar sites. This ensures cell division at the proper site by restricting the formation of a division septum at the midpoint of the long axis of the cell. The polypeptide is Cell division topological specificity factor (Azotobacter vinelandii (strain DJ / ATCC BAA-1303)).